Reading from the N-terminus, the 434-residue chain is UDP-N-acetylmuramate--L-alanine ligase (434 aa).

108-114 is a binding site for ATP; it reads GSHGKTT.

It belongs to the MurCDEF family.

The protein resides in the cytoplasm. It catalyses the reaction UDP-N-acetyl-alpha-D-muramate + L-alanine + ATP = UDP-N-acetyl-alpha-D-muramoyl-L-alanine + ADP + phosphate + H(+). Its pathway is cell wall biogenesis; peptidoglycan biosynthesis. Cell wall formation. The sequence is that of UDP-N-acetylmuramate--L-alanine ligase from Geobacillus kaustophilus (strain HTA426).